A 71-amino-acid chain; its full sequence is MFGLRMPELLLILAIVVILFGASRLPALGAGLGQGIRSFKKAFGGEDEKPTASGNGSTPTQSSSDQGSKQA.

A helical membrane pass occupies residues 9 to 29 (LLLILAIVVILFGASRLPALG). A disordered region spans residues 43 to 71 (FGGEDEKPTASGNGSTPTQSSSDQGSKQA). A compositionally biased stretch (polar residues) spans 52–71 (ASGNGSTPTQSSSDQGSKQA).

Belongs to the TatA/E family. The Tat system comprises two distinct complexes: a TatABC complex, containing multiple copies of TatA, TatB and TatC subunits, and a separate TatA complex, containing only TatA subunits. Substrates initially bind to the TatABC complex, which probably triggers association of the separate TatA complex to form the active translocon.

Its subcellular location is the cell inner membrane. In terms of biological role, part of the twin-arginine translocation (Tat) system that transports large folded proteins containing a characteristic twin-arginine motif in their signal peptide across membranes. TatA could form the protein-conducting channel of the Tat system. The sequence is that of Sec-independent protein translocase protein TatA from Anaeromyxobacter dehalogenans (strain 2CP-C).